Reading from the N-terminus, the 240-residue chain is Lipoprotein-releasing system ATP-binding protein LolD (240 aa).

An ABC transporter domain is found at 15 to 240 (IRAESLGKTY…GLRELTSAEV (226 aa)). 51–58 (GASGAGKS) contacts ATP.

This sequence belongs to the ABC transporter superfamily. Lipoprotein translocase (TC 3.A.1.125) family. The complex is composed of two ATP-binding proteins (LolD) and two transmembrane proteins (LolC and LolE).

The protein localises to the cell inner membrane. Part of the ABC transporter complex LolCDE involved in the translocation of mature outer membrane-directed lipoproteins, from the inner membrane to the periplasmic chaperone, LolA. Responsible for the formation of the LolA-lipoprotein complex in an ATP-dependent manner. This Xylella fastidiosa (strain Temecula1 / ATCC 700964) protein is Lipoprotein-releasing system ATP-binding protein LolD.